We begin with the raw amino-acid sequence, 226 residues long: Pre-mRNA-splicing factor SPF27 (226 aa).

Position 2 is an N-acetylalanine (alanine 2). Serine 94 is modified (phosphoserine). The stretch at 139-223 (YNENLVHMIE…HGEANKENIR (85 aa)) forms a coiled coil.

Belongs to the SPF27 family. In terms of assembly, component of the pre-catalytic and catalytic spliceosome complexes. Component of the postcatalytic spliceosome P complex. Component of the PRP19-CDC5L splicing complex composed of a core complex comprising a homotetramer of PRPF19, CDC5L, PLRG1 and BCAS2, and at least three less stably associated proteins CTNNBL1, CWC15 and HSPA8. Interacts directly in the complex with PRPF19, CDC5L and PLRG1.

The protein localises to the nucleus. It is found in the nucleolus. Its function is as follows. Required for pre-mRNA splicing as component of the activated spliceosome. Component of the PRP19-CDC5L complex that forms an integral part of the spliceosome and is required for activating pre-mRNA splicing. May have a scaffolding role in the spliceosome assembly as it contacts all other components of the core complex. The PRP19-CDC5L complex may also play a role in the response to DNA damage (DDR). The chain is Pre-mRNA-splicing factor SPF27 (BCAS2) from Pongo abelii (Sumatran orangutan).